Reading from the N-terminus, the 212-residue chain is Probable GTP-binding protein EngB (212 aa).

The EngB-type G domain maps to 25 to 199 (FGYEVAFAGR…WAKLDEWMEY (175 aa)). Residues 33–40 (GRSNAGKS), 60–64 (GRTQL), 78–81 (DLPG), 145–148 (TKSD), and 178–180 (FSS) each bind GTP. Serine 40 and threonine 62 together coordinate Mg(2+).

This sequence belongs to the TRAFAC class TrmE-Era-EngA-EngB-Septin-like GTPase superfamily. EngB GTPase family. Mg(2+) serves as cofactor.

Functionally, necessary for normal cell division and for the maintenance of normal septation. The chain is Probable GTP-binding protein EngB from Hydrogenovibrio crunogenus (strain DSM 25203 / XCL-2) (Thiomicrospira crunogena).